Reading from the N-terminus, the 360-residue chain is Peptide chain release factor 1 (360 aa).

Position 235 is an N5-methylglutamine (Q235).

It belongs to the prokaryotic/mitochondrial release factor family. Methylated by PrmC. Methylation increases the termination efficiency of RF1.

The protein resides in the cytoplasm. In terms of biological role, peptide chain release factor 1 directs the termination of translation in response to the peptide chain termination codons UAG and UAA. The sequence is that of Peptide chain release factor 1 from Burkholderia thailandensis (strain ATCC 700388 / DSM 13276 / CCUG 48851 / CIP 106301 / E264).